Consider the following 201-residue polypeptide: Protein S40-5 (201 aa).

Disordered stretches follow at residues 1-39 (MARGRKLTMSQSERYLGSSYSYGDSNGNSATDESELTEE) and 134-178 (SIHE…EGVG). Positions 17-29 (GSSYSYGDSNGNS) are enriched in low complexity.

Belongs to the senescence regulator S40 family.

The protein localises to the cytoplasm. This is Protein S40-5 from Arabidopsis thaliana (Mouse-ear cress).